Reading from the N-terminus, the 333-residue chain is PDZ domain-containing protein GIPC1 (333 aa).

The segment covering 1-11 (MPLGLGRRKKA) has biased composition (basic residues). The interval 1–53 (MPLGLGRRKKAPPLVENEEAEPSRSGLGVGEPGPLGGSAAGESQMGLPPPPAA) is disordered. A compositionally biased stretch (gly residues) spans 27-39 (LGVGEPGPLGGSA). Residue serine 68 is modified to Phosphoserine. The 81-residue stretch at 133–213 (EVEVFKSEEA…GRTFTLKLTE (81 aa)) folds into the PDZ domain. A phosphoserine mark is found at serine 222, serine 225, and serine 232. Residues 223–244 (QRSAGGHPGSGPQLGTGRGTLR) form a disordered region. Gly residues predominate over residues 228-240 (GHPGSGPQLGTGR). Threonine 242 bears the Phosphothreonine mark. Serine 247 carries the phosphoserine modification.

It belongs to the GIPC family. Interacts with GLUT1 (C-terminus), ACTN1, KIF1B, MYO6 and PLEKHG5. Interacts with RGS19 C-terminus. Interacts with SDC4/syndecan-4 and SEMA4C/semaphorin-4C. Widely expressed.

It localises to the cytoplasm. The protein localises to the membrane. Functionally, inhibits endothelial cell migration (in vitro). May be involved in G protein-linked signaling. This chain is PDZ domain-containing protein GIPC1 (Gipc1), found in Mus musculus (Mouse).